Consider the following 235-residue polypeptide: Transcriptional regulatory protein CseB (235 aa).

The Response regulatory domain occupies 6–119; the sequence is HVLFVEDDDV…VLVARIRAVL (114 aa). Asp55 is subject to 4-aspartylphosphate. A DNA-binding region (ompR/PhoB-type) is located at residues 141–235; the sequence is GGVLTFGELE…VRGFGYKLKA (95 aa).

Phosphorylated by CseC.

Its subcellular location is the cytoplasm. In terms of biological role, member of the two-component regulatory system CseB/CseC involved in the stability of the cell envelope. CseB activates transcription of RNA polymerase sigma-E factor, in response to changes in the cell envelope. The protein is Transcriptional regulatory protein CseB (cseB) of Streptomyces avermitilis (strain ATCC 31267 / DSM 46492 / JCM 5070 / NBRC 14893 / NCIMB 12804 / NRRL 8165 / MA-4680).